Reading from the N-terminus, the 380-residue chain is L-prolyl-[peptidyl-carrier protein] dehydrogenase (380 aa).

The active-site Proton acceptor is Glu-243. FAD contacts are provided by Arg-269 and Gln-280.

The protein belongs to the acyl-CoA dehydrogenase family. It depends on FAD as a cofactor.

It carries out the reaction L-prolyl-[peptidyl-carrier protein] + 2 oxidized [electron-transfer flavoprotein] + H(+) = (1H-pyrrole-2-carbonyl)-[peptidyl-carrier protein] + 2 reduced [electron-transfer flavoprotein]. Functionally, involved in the biosynthesis of pyoluteorin. Catalyzes the desaturation of the L-prolyl-[PltL] to yield 1H-pyrrole-2-carbonyl-[PltL]. The chain is L-prolyl-[peptidyl-carrier protein] dehydrogenase from Pseudomonas fluorescens (strain ATCC BAA-477 / NRRL B-23932 / Pf-5).